The chain runs to 101 residues: UPF0473 protein LAF_0524 (101 aa).

Belongs to the UPF0473 family.

This is UPF0473 protein LAF_0524 from Limosilactobacillus fermentum (strain NBRC 3956 / LMG 18251) (Lactobacillus fermentum).